Consider the following 194-residue polypeptide: Crossover junction endodeoxyribonuclease RuvC (194 aa).

Active-site residues include D7, E68, and D141. Residues D7, E68, and D141 each coordinate Mg(2+).

This sequence belongs to the RuvC family. In terms of assembly, homodimer which binds Holliday junction (HJ) DNA. The HJ becomes 2-fold symmetrical on binding to RuvC with unstacked arms; it has a different conformation from HJ DNA in complex with RuvA. In the full resolvosome a probable DNA-RuvA(4)-RuvB(12)-RuvC(2) complex forms which resolves the HJ. Mg(2+) is required as a cofactor.

Its subcellular location is the cytoplasm. The catalysed reaction is Endonucleolytic cleavage at a junction such as a reciprocal single-stranded crossover between two homologous DNA duplexes (Holliday junction).. The RuvA-RuvB-RuvC complex processes Holliday junction (HJ) DNA during genetic recombination and DNA repair. Endonuclease that resolves HJ intermediates. Cleaves cruciform DNA by making single-stranded nicks across the HJ at symmetrical positions within the homologous arms, yielding a 5'-phosphate and a 3'-hydroxyl group; requires a central core of homology in the junction. The consensus cleavage sequence is 5'-(A/T)TT(C/G)-3'. Cleavage occurs on the 3'-side of the TT dinucleotide at the point of strand exchange. HJ branch migration catalyzed by RuvA-RuvB allows RuvC to scan DNA until it finds its consensus sequence, where it cleaves and resolves the cruciform DNA. This Bifidobacterium longum (strain DJO10A) protein is Crossover junction endodeoxyribonuclease RuvC.